The following is a 184-amino-acid chain: TATA-box-binding protein (184 aa).

2 tandem repeats follow at residues 9-85 (IENI…IDKL) and 100-178 (VQNI…KKDL).

The protein belongs to the TBP family.

General factor that plays a role in the activation of archaeal genes transcribed by RNA polymerase. Binds specifically to the TATA box promoter element which lies close to the position of transcription initiation. The chain is TATA-box-binding protein from Picrophilus torridus (strain ATCC 700027 / DSM 9790 / JCM 10055 / NBRC 100828 / KAW 2/3).